The sequence spans 184 residues: Elongation factor P (184 aa).

The protein belongs to the elongation factor P family.

It localises to the cytoplasm. It functions in the pathway protein biosynthesis; polypeptide chain elongation. In terms of biological role, involved in peptide bond synthesis. Stimulates efficient translation and peptide-bond synthesis on native or reconstituted 70S ribosomes in vitro. Probably functions indirectly by altering the affinity of the ribosome for aminoacyl-tRNA, thus increasing their reactivity as acceptors for peptidyl transferase. The chain is Elongation factor P from Variovorax paradoxus (strain S110).